The chain runs to 432 residues: Adenylosuccinate synthetase (432 aa).

Residues 12-18 (GDEGKGK) and 40-42 (GHT) contribute to the GTP site. The active-site Proton acceptor is the Asp-13. Residues Asp-13 and Gly-40 each contribute to the Mg(2+) site. Residues 13-16 (DEGK), 38-41 (NAGH), Thr-129, Arg-143, Gln-224, Thr-239, and Arg-303 each bind IMP. His-41 acts as the Proton donor in catalysis. 299–305 (VTTGRRR) lines the substrate pocket. GTP is bound by residues Arg-305, 331 to 333 (KLD), and 413 to 415 (GVG).

It belongs to the adenylosuccinate synthetase family. Homodimer. The cofactor is Mg(2+).

It is found in the cytoplasm. It catalyses the reaction IMP + L-aspartate + GTP = N(6)-(1,2-dicarboxyethyl)-AMP + GDP + phosphate + 2 H(+). It participates in purine metabolism; AMP biosynthesis via de novo pathway; AMP from IMP: step 1/2. Functionally, plays an important role in the de novo pathway of purine nucleotide biosynthesis. Catalyzes the first committed step in the biosynthesis of AMP from IMP. This Mycobacterium tuberculosis (strain CDC 1551 / Oshkosh) protein is Adenylosuccinate synthetase.